A 405-amino-acid chain; its full sequence is Putative polysaccharide ligase RP358 (405 aa).

The next 10 membrane-spanning stretches (helical) occupy residues I23–I43, L77–V97, V120–I140, F156–I178, I201–A221, I227–A247, L270–F290, I322–Y342, V353–Y375, and I377–V397.

Belongs to the O-antigen ligase family.

It localises to the membrane. This Rickettsia prowazekii (strain Madrid E) protein is Putative polysaccharide ligase RP358.